The primary structure comprises 398 residues: O-methyltransferase penC (398 aa).

D263 lines the S-adenosyl-L-methionine pocket. H305 (proton acceptor) is an active-site residue.

Belongs to the class I-like SAM-binding methyltransferase superfamily. Cation-independent O-methyltransferase family.

It functions in the pathway secondary metabolite biosynthesis. It participates in alkaloid biosynthesis. The protein operates within mycotoxin biosynthesis. Functionally, O-methyltransferase; part of the gene cluster that mediates the biosynthesis of penigequinolones, potent insecticidal alkaloids that contain a highly modified 10-carbon prenyl group. The first stage is catalyzed by the nonribosomal peptide synthetase penN that condenses anthranilic acid and O-methyl-L-tyrosine to produce 4'-methoxycyclopeptin. 4'-methoxycyclopeptin is then converted to 4'-methoxydehydrocyclopeptin by the ketoglutarate-dependent dioxygenase penM through dehydrogenation to form a double bond between C-alpha and C-beta of the O-methyltyrosine side chain. PenM also converts its first product methoxydehydrocyclopeptin to 4'-methoxycyclopenin. The following conversion of 4'methoxycyclopenin into 4'-methoxyviridicatin is catalyzed by the cyclopenase penL. 4'-methoxyviridicatin is the precursor of quinolone natural products, and is further converted to quinolinone B. The prenyltransferase penI then catalyzes the canonical Friedel-Crafts alkylation of quinolinone B with dimethylallyl cation to yield dimethylallyl quinolone, which is subjected to FAD-dependent dehydrogenation by the FAD-linked oxidoreductase penH to yield conjugated aryl diene. The delta(3') double bond then serves as the site of the second alkylation with DMAPP catalyzed by the prenyltransferase penG to yield a carbenium ion intermediate, which can be attacked by H(2)O to yield a styrenyl quinolone containing a C3'-hydroxyprenyl chain, or undergo cyclization to yield yaequinolones J1 and J2. The conversion of the styrenyl quinolone into the tetrahydrofuran-containing yaequinolone C is performed by the FAD-dependent monooxygenase penE and involves epoxidation of the terminal C7'-C8' olefin, followed by epoxide ring opening initiated by the C3' hydroxyl group. The predicted cysteine hydrolase penJ acts as an epoxide hydrolase that enhances the rate of the 5-exo-tet cyclization step, increasing the yield of yaequinolone C. PenF catalyzes the cationic rearrangement of the epoxide formed by penE (before ring opening to produce yaequinolone C) into yaequinolone D. Finally, the short-chain dehydrogenase/reductase (SDR)-like reductase penD, catalyzes both the dehydration of yaequinolone D and the reduction of the resulting oxonium to yield penigequinolone. The sequence is that of O-methyltransferase penC from Penicillium thymicola.